The following is a 433-amino-acid chain: ATP-dependent protease ATPase subunit HslU (433 aa).

Residues Val18, 60 to 65, Asp246, Glu311, and Arg383 each bind ATP; that span reads GVGKTE.

The protein belongs to the ClpX chaperone family. HslU subfamily. A double ring-shaped homohexamer of HslV is capped on each side by a ring-shaped HslU homohexamer. The assembly of the HslU/HslV complex is dependent on binding of ATP.

It localises to the cytoplasm. ATPase subunit of a proteasome-like degradation complex; this subunit has chaperone activity. The binding of ATP and its subsequent hydrolysis by HslU are essential for unfolding of protein substrates subsequently hydrolyzed by HslV. HslU recognizes the N-terminal part of its protein substrates and unfolds these before they are guided to HslV for hydrolysis. The protein is ATP-dependent protease ATPase subunit HslU of Rhodopseudomonas palustris (strain TIE-1).